The following is a 576-amino-acid chain: Interleukin-1 receptor type 1 (576 aa).

The N-terminal stretch at methionine 1–serine 19 is a signal peptide. Ig-like C2-type domains are found at residues leucine 20–serine 115, proline 121–threonine 217, and proline 229–valine 331. The Extracellular segment spans residues leucine 20–lysine 338. 3 disulfides stabilise this stretch: cysteine 25-cysteine 107, cysteine 46-cysteine 99, and cysteine 145-cysteine 199. N-linked (GlcNAc...) asparagine glycosylation is found at asparagine 63 and asparagine 103. Asparagine 236, asparagine 252, and asparagine 266 each carry an N-linked (GlcNAc...) asparagine glycan. A disulfide bridge links cysteine 251 with cysteine 315. Residues asparagine 339 to tyrosine 359 traverse the membrane as a helical segment. Residues lysine 360–glycine 576 are Cytoplasmic-facing. The 156-residue stretch at arginine 386–methionine 541 folds into the TIR domain. Glutamate 473 is an active-site residue. Tyrosine 499 carries the phosphotyrosine modification. Threonine 556 is subject to Phosphothreonine; by PKC.

Belongs to the interleukin-1 receptor family. In terms of assembly, the interleukin-1 receptor complex is a heterodimer of IL1R1 and IL1RAP. Interacts with PIK3R1. Interacts with IL1A. In terms of processing, a soluble form (sIL1R1) is probably produced by proteolytic cleavage at the cell surface (shedding). Post-translationally, rapidly phosphorylated on Tyr-499 in response to IL-1, which creates a SH2 binding site for the PI 3-kinase regulatory subunit PIK3R1.

Its subcellular location is the membrane. It localises to the cell membrane. The protein localises to the secreted. It catalyses the reaction NAD(+) + H2O = ADP-D-ribose + nicotinamide + H(+). Receptor for IL1A, IL1B and IL1RN. After binding to interleukin-1 associates with the coreceptor IL1RAP to form the high affinity interleukin-1 receptor complex which mediates interleukin-1-dependent activation of NF-kappa-B, MAPK and other pathways. Signaling involves the recruitment of adapter molecules such as TOLLIP, MYD88, and IRAK1 or IRAK2 via the respective TIR domains of the receptor/coreceptor subunits. Binds ligands with comparable affinity and binding of antagonist IL1RN prevents association with IL1RAP to form a signaling complex. Involved in IL1B-mediated costimulation of IFNG production from T-helper 1 (Th1) cells. This chain is Interleukin-1 receptor type 1 (Il1r1), found in Rattus norvegicus (Rat).